A 311-amino-acid chain; its full sequence is MQRFIKWLAVITSLDLLVVLLGGALVTKTGSGQGCGKSWPLCNGEFVPSNLSMETIIELSHRLTSGSAGILVTLLCILSWKYYKHVRETKTLAILSFVFLVAQALMGAAAVVWGQMPAVLAIHFGISLISFASVILLTCLIFEIDQKFDARSLIMDKKMKFHIYGVTIYSYIVVYTGALVRHERATLACPDFPLCSKSRPMPTQLHEWVQMGHRVAAMLIFAWILYAMIIAIRHYKQQRVVYWGWIISFILVTLQAIVGILVVFTNASLAMALLHSLFISCLFAVLCYLVMIGTRSTVNAKETESTSKQTK.

At 1–6 (MQRFIK) the chain is on the cytoplasmic side. A helical membrane pass occupies residues 7–27 (WLAVITSLDLLVVLLGGALVT). The Extracellular portion of the chain corresponds to 28–62 (KTGSGQGCGKSWPLCNGEFVPSNLSMETIIELSHR). Residues C35 and C42 are joined by a disulfide bond. E58 is a catalytic residue. H61 lines the heme o pocket. Residues 63–83 (LTSGSAGILVTLLCILSWKYY) form a helical membrane-spanning segment. The Cytoplasmic portion of the chain corresponds to 84–91 (KHVRETKT). A helical membrane pass occupies residues 92–112 (LAILSFVFLVAQALMGAAAVV). Residues 113 to 121 (WGQMPAVLA) are Extracellular-facing. Residues 122–142 (IHFGISLISFASVILLTCLIF) traverse the membrane as a helical segment. A heme o-binding site is contributed by H123. Topologically, residues 143 to 159 (EIDQKFDARSLIMDKKM) are cytoplasmic. A helical membrane pass occupies residues 160–180 (KFHIYGVTIYSYIVVYTGALV). The Extracellular segment spans residues 181-211 (RHERATLACPDFPLCSKSRPMPTQLHEWVQM). An intrachain disulfide couples C189 to C195. Residues 212 to 232 (GHRVAAMLIFAWILYAMIIAI) traverse the membrane as a helical segment. H213 contributes to the heme b binding site. Topologically, residues 233–243 (RHYKQQRVVYW) are cytoplasmic. A helical transmembrane segment spans residues 244-264 (GWIISFILVTLQAIVGILVVF). At 265 to 271 (TNASLAM) the chain is on the extracellular side. A helical transmembrane segment spans residues 272-292 (ALLHSLFISCLFAVLCYLVMI). H275 serves as a coordination point for heme b. Residues 293–311 (GTRSTVNAKETESTSKQTK) lie on the Cytoplasmic side of the membrane.

Belongs to the COX15/CtaA family. Type 1 subfamily. As to quaternary structure, interacts with CtaB. Heme b serves as cofactor.

The protein resides in the cell membrane. The enzyme catalyses Fe(II)-heme o + 2 A + H2O = Fe(II)-heme a + 2 AH2. It functions in the pathway porphyrin-containing compound metabolism; heme A biosynthesis; heme A from heme O: step 1/1. Functionally, catalyzes the conversion of heme O to heme A by two successive hydroxylations of the methyl group at C8. The first hydroxylation forms heme I, the second hydroxylation results in an unstable dihydroxymethyl group, which spontaneously dehydrates, resulting in the formyl group of heme A. This Bacillus mycoides (strain KBAB4) (Bacillus weihenstephanensis) protein is Heme A synthase.